The chain runs to 478 residues: NAD-dependent malic enzyme (478 aa).

The ACT domain occupies threonine 12–arginine 86. The active-site Proton donor is tyrosine 114. Lysine 169 functions as the Proton acceptor in the catalytic mechanism. 3 residues coordinate a divalent metal cation: glutamate 211, aspartate 212, and aspartate 237. NAD(+) contacts are provided by residues isoleucine 270 to alanine 273, asparagine 363, and asparagine 393.

It belongs to the malic enzymes family. As to quaternary structure, homotetramer. Mg(2+) serves as cofactor. Requires Mn(2+) as cofactor.

It catalyses the reaction (S)-malate + NAD(+) = pyruvate + CO2 + NADH. The enzyme catalyses oxaloacetate + H(+) = pyruvate + CO2. The activity is enhanced 5-7 times by ammonium and potassium. In terms of biological role, in addition to the NAD-dependent oxidative decarboxylation of L-malate, the enzyme catalyzes the decarboxylation of oxaloacetate. This is NAD-dependent malic enzyme from Geobacillus stearothermophilus (Bacillus stearothermophilus).